A 453-amino-acid chain; its full sequence is Phosphoglucosamine mutase (453 aa).

Residue S105 is the Phosphoserine intermediate of the active site. Residues S105, D244, D246, and D248 each coordinate Mg(2+). S105 carries the post-translational modification Phosphoserine.

This sequence belongs to the phosphohexose mutase family. Mg(2+) serves as cofactor. Post-translationally, activated by phosphorylation.

It carries out the reaction alpha-D-glucosamine 1-phosphate = D-glucosamine 6-phosphate. Catalyzes the conversion of glucosamine-6-phosphate to glucosamine-1-phosphate. The sequence is that of Phosphoglucosamine mutase from Blochmanniella pennsylvanica (strain BPEN).